The primary structure comprises 431 residues: Histidine--tRNA ligase (431 aa).

The protein belongs to the class-II aminoacyl-tRNA synthetase family. In terms of assembly, homodimer.

It localises to the cytoplasm. The enzyme catalyses tRNA(His) + L-histidine + ATP = L-histidyl-tRNA(His) + AMP + diphosphate + H(+). This Leifsonia xyli subsp. xyli (strain CTCB07) protein is Histidine--tRNA ligase (hisS).